The sequence spans 288 residues: T-lymphocyte activation antigen CD80 (288 aa).

Residues 1-34 (MGHTRRQGTSPSKCPYLNFFQLLVLAGLSHFCSG) form the signal peptide. An Ig-like V-type domain is found at 35–135 (VIHVTKEVKE…FKREHLAEVT (101 aa)). The Extracellular segment spans residues 35–242 (VIHVTKEVKE…TTKQEHFPDN (208 aa)). 2 disulfide bridges follow: cysteine 50-cysteine 116 and cysteine 162-cysteine 216. N-linked (GlcNAc...) asparagine glycosylation is found at asparagine 53, asparagine 89, asparagine 98, asparagine 186, asparagine 207, asparagine 211, asparagine 226, and asparagine 232. One can recognise an Ig-like C2-type domain in the interval 145 to 230 (PSISDFEIPT…GHLRVNQTFN (86 aa)). A helical membrane pass occupies residues 243–263 (LLPSWAITLISVNGIFVICCL). 4 S-palmitoyl cysteine lipidation sites follow: cysteine 261, cysteine 262, cysteine 266, and cysteine 271. Over 264 to 288 (TYCFAPRCRERRRNERLRRESVRPV) the chain is Cytoplasmic. The residue at position 284 (serine 284) is a Phosphoserine.

In terms of assembly, homodimer. Interacts with CTLA4; this interaction inhibits T-cell activation. Interacts with PDL1/CD274; this interaction blocks PDL1/PDCD1 binding and thus PDL1/CD274 inhibitory function. Interacts with CD28. As to quaternary structure, (Microbial infection) Interacts with adenovirus subgroup B fiber proteins. (Microbial infection) Interacts with Orthopoxvirus OPG038/M2 protein, inhibiting the interaction with CTLA4/CD152. In terms of processing, palmitoylated by ZDHHC20; palmitoylation protects CD80 from ubiquitin-mediated degradation, regulating the protein stability, and ensures its accurate plasma membrane localization. As to expression, expressed on activated B-cells, macrophages and dendritic cells.

The protein resides in the cell membrane. Functionally, costimulatory molecule that belongs to the immunoglobulin superfamily that plays an important role in T-lymphocyte activation. Acts as the primary auxiliary signal augmenting the MHC/TCR signal in naive T-cells together with the CD28 receptor which is constitutively expressed on the cell surface of T-cells. In turn, activates different signaling pathways such as NF-kappa-B or MAPK leading to the production of different cytokines. In addition, CD28/CD80 costimulatory signal stimulates glucose metabolism and ATP synthesis of T-cells by activating the PI3K/Akt signaling pathway. Also acts as a regulator of PDL1/PDCD1 interactions to limit excess engagement of PDL1 and its inhibitory role in immune responses. Expressed on B-cells, plays a critical role in regulating interactions between B-cells and T-cells in both early and late germinal center responses, which are crucial for the generation of effective humoral immune responses. Its function is as follows. (Microbial infection) Acts as a receptor for adenovirus subgroup B. This chain is T-lymphocyte activation antigen CD80 (CD80), found in Homo sapiens (Human).